A 206-amino-acid polypeptide reads, in one-letter code: MIGRLHGIIIEKSPPEILLDVGGVGYELQLPMTCFYELPAVGQEATIITHFVVREDAQLLYGFNTRQERTLFRELLKANGVGPKLALAIMSGMSANQFVSCVEREDVSSLVKLPGVGKKTAERLIVEMKDRLKGWISHDLFTPYTDAAPVDHEPSLAPADTVESEAVAALLALGYKPQQASLVVSKVIKPEMTVENVIREALRSML.

The domain I stretch occupies residues 1 to 64; that stretch reads MIGRLHGIII…EDAQLLYGFN (64 aa). The tract at residues 65 to 143 is domain II; sequence TRQERTLFRE…GWISHDLFTP (79 aa). The interval 144–157 is flexible linker; it reads YTDAAPVDHEPSLA. The domain III stretch occupies residues 158-206; that stretch reads PADTVESEAVAALLALGYKPQQASLVVSKVIKPEMTVENVIREALRSML.

It belongs to the RuvA family. Homotetramer. Forms an RuvA(8)-RuvB(12)-Holliday junction (HJ) complex. HJ DNA is sandwiched between 2 RuvA tetramers; dsDNA enters through RuvA and exits via RuvB. An RuvB hexamer assembles on each DNA strand where it exits the tetramer. Each RuvB hexamer is contacted by two RuvA subunits (via domain III) on 2 adjacent RuvB subunits; this complex drives branch migration. In the full resolvosome a probable DNA-RuvA(4)-RuvB(12)-RuvC(2) complex forms which resolves the HJ.

The protein localises to the cytoplasm. The RuvA-RuvB-RuvC complex processes Holliday junction (HJ) DNA during genetic recombination and DNA repair, while the RuvA-RuvB complex plays an important role in the rescue of blocked DNA replication forks via replication fork reversal (RFR). RuvA specifically binds to HJ cruciform DNA, conferring on it an open structure. The RuvB hexamer acts as an ATP-dependent pump, pulling dsDNA into and through the RuvAB complex. HJ branch migration allows RuvC to scan DNA until it finds its consensus sequence, where it cleaves and resolves the cruciform DNA. In Tolumonas auensis (strain DSM 9187 / NBRC 110442 / TA 4), this protein is Holliday junction branch migration complex subunit RuvA.